A 446-amino-acid chain; its full sequence is Phosphoglucosamine mutase (446 aa).

The active-site Phosphoserine intermediate is S100. Mg(2+) is bound by residues S100, D241, D243, and D245. Position 100 is a phosphoserine (S100).

Belongs to the phosphohexose mutase family. Mg(2+) is required as a cofactor. Activated by phosphorylation.

It catalyses the reaction alpha-D-glucosamine 1-phosphate = D-glucosamine 6-phosphate. Its function is as follows. Catalyzes the conversion of glucosamine-6-phosphate to glucosamine-1-phosphate. In Methylorubrum extorquens (strain CM4 / NCIMB 13688) (Methylobacterium extorquens), this protein is Phosphoglucosamine mutase.